Consider the following 298-residue polypeptide: uncharacterized protein (298 aa).

The active site involves D119.

This sequence belongs to the pseudouridine synthase RluA family.

It catalyses the reaction a uridine in RNA = a pseudouridine in RNA. This is an uncharacterized protein from Helicobacter pylori (strain ATCC 700392 / 26695) (Campylobacter pylori).